The primary structure comprises 248 residues: Protein maestro (248 aa).

Residues 1 to 21 are disordered; it reads MDQRQRRILGQPLSIPTSQPK. The stretch at 128–163 is one HEAT repeat; sequence SFFIDITLQTRTLLDDENDSLRYSAFVLFGQLAAFA.

As to expression, ubiquitous.

It is found in the nucleus. The protein resides in the nucleolus. This is Protein maestro (MRO) from Homo sapiens (Human).